The following is a 500-amino-acid chain: Metacaspase-5 (500 aa).

Residues 1 to 18 (MDAALALLFGQVATAVLP) form the signal peptide. The segment at 19–63 (YVVNSIGRVPRPKRVDVKKAMGEAHQCRPVVPYRAPRPYTEGRVK) is important for catalytic activity. Asn70 and Asn113 each carry an N-linked (GlcNAc...) asparagine glycan. Residue His147 is part of the active site. Ca(2+) contacts are provided by Asp162, Asp178, and Asp179. The active site involves Cys202. Position 209 (Asp209) interacts with Ca(2+). Residues Asn219, Asn235, Asn258, Asn264, Asn283, and Asn332 are each glycosylated (N-linked (GlcNAc...) asparagine). Disordered regions lie at residues 358-419 (EATL…QAYY) and 444-500 (QPPQ…PGRK). The span at 379–389 (ASTSNGKSNPG) shows a compositional bias: polar residues. Positions 444–461 (QPPQQAYYQPPQQAYYQP) are enriched in low complexity.

The protein belongs to the peptidase C14B family.

The protein localises to the recycling endosome. Cysteine protease that cleaves specifically after arginine or lysine residues. This chain is Metacaspase-5, found in Trypanosoma brucei brucei.